Here is a 490-residue protein sequence, read N- to C-terminus: Trigger factor (490 aa).

One can recognise a PPIase FKBP-type domain in the interval 162-243 (GDFVSIDLSA…VGSIKERELP (82 aa)). Residues 433-490 (VDAVLGPRRGGADEAGAEAEAAEEKPAKAKKSADSEKTDKSEKAEKKSKKKSKDDDAE) are disordered. A compositionally biased stretch (basic and acidic residues) spans 454-477 (AEEKPAKAKKSADSEKTDKSEKAE).

This sequence belongs to the FKBP-type PPIase family. Tig subfamily.

It is found in the cytoplasm. It catalyses the reaction [protein]-peptidylproline (omega=180) = [protein]-peptidylproline (omega=0). Its function is as follows. Involved in protein export. Acts as a chaperone by maintaining the newly synthesized protein in an open conformation. Functions as a peptidyl-prolyl cis-trans isomerase. The polypeptide is Trigger factor (Mycobacteroides abscessus (strain ATCC 19977 / DSM 44196 / CCUG 20993 / CIP 104536 / JCM 13569 / NCTC 13031 / TMC 1543 / L948) (Mycobacterium abscessus)).